The primary structure comprises 260 residues: Pyridoxine 5'-phosphate synthase (260 aa).

Asn-15 serves as a coordination point for 3-amino-2-oxopropyl phosphate. 17 to 18 (DH) is a binding site for 1-deoxy-D-xylulose 5-phosphate. 3-amino-2-oxopropyl phosphate is bound at residue Arg-26. Catalysis depends on His-51, which acts as the Proton acceptor. Arg-53 and His-58 together coordinate 1-deoxy-D-xylulose 5-phosphate. Glu-78 acts as the Proton acceptor in catalysis. A 1-deoxy-D-xylulose 5-phosphate-binding site is contributed by Thr-108. The active-site Proton donor is His-199. Residues Gly-200 and 221–222 (GH) each bind 3-amino-2-oxopropyl phosphate.

The protein belongs to the PNP synthase family. Homooctamer; tetramer of dimers.

It localises to the cytoplasm. It carries out the reaction 3-amino-2-oxopropyl phosphate + 1-deoxy-D-xylulose 5-phosphate = pyridoxine 5'-phosphate + phosphate + 2 H2O + H(+). It participates in cofactor biosynthesis; pyridoxine 5'-phosphate biosynthesis; pyridoxine 5'-phosphate from D-erythrose 4-phosphate: step 5/5. Its function is as follows. Catalyzes the complicated ring closure reaction between the two acyclic compounds 1-deoxy-D-xylulose-5-phosphate (DXP) and 3-amino-2-oxopropyl phosphate (1-amino-acetone-3-phosphate or AAP) to form pyridoxine 5'-phosphate (PNP) and inorganic phosphate. The sequence is that of Pyridoxine 5'-phosphate synthase from Cupriavidus pinatubonensis (strain JMP 134 / LMG 1197) (Cupriavidus necator (strain JMP 134)).